A 363-amino-acid polypeptide reads, in one-letter code: S-adenosylmethionine:tRNA ribosyltransferase-isomerase (363 aa).

The protein belongs to the QueA family. In terms of assembly, monomer.

Its subcellular location is the cytoplasm. It carries out the reaction 7-aminomethyl-7-carbaguanosine(34) in tRNA + S-adenosyl-L-methionine = epoxyqueuosine(34) in tRNA + adenine + L-methionine + 2 H(+). Its pathway is tRNA modification; tRNA-queuosine biosynthesis. Functionally, transfers and isomerizes the ribose moiety from AdoMet to the 7-aminomethyl group of 7-deazaguanine (preQ1-tRNA) to give epoxyqueuosine (oQ-tRNA). This is S-adenosylmethionine:tRNA ribosyltransferase-isomerase from Brucella melitensis biotype 2 (strain ATCC 23457).